Here is a 196-residue protein sequence, read N- to C-terminus: Probable malonic semialdehyde reductase RutE (196 aa).

This sequence belongs to the nitroreductase family. HadB/RutE subfamily. The cofactor is FMN.

The enzyme catalyses 3-hydroxypropanoate + NADP(+) = 3-oxopropanoate + NADPH + H(+). In terms of biological role, may reduce toxic product malonic semialdehyde to 3-hydroxypropionic acid, which is excreted. This is Probable malonic semialdehyde reductase RutE from Escherichia coli O6:H1 (strain CFT073 / ATCC 700928 / UPEC).